Here is a 346-residue protein sequence, read N- to C-terminus: Putative aminopeptidase YhfE (346 aa).

A divalent metal cation contacts are provided by histidine 68 and aspartate 185. Glutamate 219 functions as the Proton acceptor in the catalytic mechanism. Residues glutamate 220, aspartate 240, and histidine 320 each contribute to the a divalent metal cation site.

It belongs to the peptidase M42 family. A divalent metal cation is required as a cofactor.

The polypeptide is Putative aminopeptidase YhfE (yhfE) (Bacillus subtilis (strain 168)).